We begin with the raw amino-acid sequence, 545 residues long: T-complex protein 1 subunit gamma (545 aa).

M1 is modified (N-acetylmethionine). A disordered region spans residues 1-24; sequence MMGHRPVLVLSQNTKRESGRKVQS. S11 is subject to Phosphoserine. A Glycyl lysine isopeptide (Lys-Gly) (interchain with G-Cter in SUMO2) cross-link involves residue K15. G42 contributes to the ADP binding site. G42 provides a ligand contact to ATP. D93 is a binding site for Mg(2+). Residues G94, T95, T96, S97, T162, and K163 each contribute to the ADP site. ATP-binding residues include G94, T95, and T96. Phosphoserine is present on S170. N6-acetyllysine is present on K222. Residues S243 and S244 each carry the phosphoserine modification. Residue Y247 is modified to Phosphotyrosine. Residues K248 and K249 each participate in a glycyl lysine isopeptide (Lys-Gly) (interchain with G-Cter in SUMO2) cross-link. S252 carries the phosphoserine modification. A disulfide bond links C366 and C372. Residue K381 forms a Glycyl lysine isopeptide (Lys-Gly) (interchain with G-Cter in SUMO2) linkage. ADP is bound at residue G411. Position 411 (G411) interacts with ATP. T430 and T459 each carry phosphothreonine. ADP contacts are provided by G482, E483, E497, and K502. G482 is an ATP binding site. E497 contacts ATP. The interval 526–545 is disordered; sequence HKKKGDDQSRQGGAPDAGQE.

It belongs to the TCP-1 chaperonin family. In terms of assembly, component of the chaperonin-containing T-complex (TRiC), a hexadecamer composed of two identical back-to-back stacked rings enclosing a protein folding chamber. Each ring is made up of eight different subunits: TCP1/CCT1, CCT2, CCT3, CCT4, CCT5, CCT6A/CCT6, CCT7, CCT8. Interacts with PACRG. Interacts with DNAAF4. Interacts with DLEC1.

Its subcellular location is the cytoplasm. It carries out the reaction ATP + H2O = ADP + phosphate + H(+). Functionally, component of the chaperonin-containing T-complex (TRiC), a molecular chaperone complex that assists the folding of actin, tubulin and other proteins upon ATP hydrolysis. The TRiC complex mediates the folding of WRAP53/TCAB1, thereby regulating telomere maintenance. As part of the TRiC complex may play a role in the assembly of BBSome, a complex involved in ciliogenesis regulating transports vesicles to the cilia. This is T-complex protein 1 subunit gamma (CCT3) from Homo sapiens (Human).